Reading from the N-terminus, the 101-residue chain is Large ribosomal subunit protein bL28 (101 aa).

It belongs to the bacterial ribosomal protein bL28 family.

The protein is Large ribosomal subunit protein bL28 of Rhodopseudomonas palustris (strain BisA53).